We begin with the raw amino-acid sequence, 285 residues long: Probable endonuclease 4 (285 aa).

Positions 67, 107, 144, 178, 181, 215, 228, 230, and 260 each coordinate Zn(2+).

Belongs to the AP endonuclease 2 family. Requires Zn(2+) as cofactor.

The enzyme catalyses Endonucleolytic cleavage to 5'-phosphooligonucleotide end-products.. Functionally, endonuclease IV plays a role in DNA repair. It cleaves phosphodiester bonds at apurinic or apyrimidinic (AP) sites, generating a 3'-hydroxyl group and a 5'-terminal sugar phosphate. The sequence is that of Probable endonuclease 4 from Chloroflexus aurantiacus (strain ATCC 29366 / DSM 635 / J-10-fl).